The following is a 557-amino-acid chain: Hdr-like menaquinol oxidoreductase iron-sulfur subunit (557 aa).

2 4Fe-4S ferredoxin-type domains span residues 86 to 115 (RAFK…GDPK) and 155 to 184 (KEWY…AEVV). 8 residues coordinate [4Fe-4S] cluster: C95, C98, C101, C105, C164, C167, C170, and C174.

It depends on [4Fe-4S] cluster as a cofactor.

The protein localises to the membrane. In terms of biological role, has menaquinol-oxidizing activity. The HmeC and HmeD subunits may together mediate electron transfer from menaquinol to an unidentified electron acceptor on the cytoplasmic side of the membrane. The polypeptide is Hdr-like menaquinol oxidoreductase iron-sulfur subunit (hmeD) (Archaeoglobus profundus (strain DSM 5631 / JCM 9629 / NBRC 100127 / Av18)).